Reading from the N-terminus, the 121-residue chain is Large ribosomal subunit protein bL20 (121 aa).

This sequence belongs to the bacterial ribosomal protein bL20 family.

In terms of biological role, binds directly to 23S ribosomal RNA and is necessary for the in vitro assembly process of the 50S ribosomal subunit. It is not involved in the protein synthesizing functions of that subunit. This is Large ribosomal subunit protein bL20 from Polynucleobacter necessarius subsp. necessarius (strain STIR1).